The following is a 283-amino-acid chain: 5'-nucleotidase SurE (283 aa).

D14, D15, S47, and N105 together coordinate a divalent metal cation.

This sequence belongs to the SurE nucleotidase family. A divalent metal cation serves as cofactor.

It is found in the cytoplasm. It catalyses the reaction a ribonucleoside 5'-phosphate + H2O = a ribonucleoside + phosphate. Functionally, nucleotidase that shows phosphatase activity on nucleoside 5'-monophosphates. The protein is 5'-nucleotidase SurE of Chlamydia trachomatis serovar L2 (strain ATCC VR-902B / DSM 19102 / 434/Bu).